A 397-amino-acid polypeptide reads, in one-letter code: Odorant receptor 22b (397 aa).

Over Met1–Lys49 the chain is Cytoplasmic. A helical membrane pass occupies residues Leu50–Glu70. At Tyr71–Ser85 the chain is on the extracellular side. A helical transmembrane segment spans residues Ser86–Met105. The Cytoplasmic segment spans residues Gly106–Cys143. A helical membrane pass occupies residues Tyr144–Met164. The Extracellular segment spans residues Lys165 to Arg194. A helical membrane pass occupies residues Gly195 to Ala215. The Cytoplasmic portion of the chain corresponds to Arg216 to Thr268. The helical transmembrane segment at Ile269 to Phe289 threads the bilayer. Topologically, residues Phe290 to Thr295 are extracellular. The helical transmembrane segment at Gly296 to Leu316 threads the bilayer. At Cys317–Leu347 the chain is on the cytoplasmic side. A helical membrane pass occupies residues Val348–Ile368. At Ser369–Gln397 the chain is on the extracellular side.

This sequence belongs to the insect chemoreceptor superfamily. Heteromeric odorant receptor channel (TC 1.A.69) family. Or2a subfamily. In terms of assembly, interacts with Orco, via conserved C-terminal cytoplasmic loops. Complexes exist early in the endomembrane system in olfactory sensory neurons (OSNs), coupling these complexes to the conserved ciliary trafficking pathway. Expressed with Orco in 20-22 sensory neurons on the medial-proximal edge of the antenna. This expression pattern matches the distribution of the large sensilla basiconica. Expression is first seen at 60 hours APF in a subset of cells restricted to a subregion of the developing antenna. Expression continues throughout antennal development. Expressed in the ab3A neuron which responds to ethyl butyrate.

It is found in the cell membrane. Its function is as follows. Odorant receptor which mediates acceptance or avoidance behavior, depending on its substrates. The odorant receptor repertoire encodes a large collection of odor stimuli that vary widely in identity, intensity, and duration. Involved in the behavioral responses to esters. Complexes with Orco to form odorant-sensing units, providing sensitive and prolonged odorant signaling and calcium permeability. They are necessary and sufficient to promote functional reconstitution of odor-evoked signaling in sensory neurons that normally respond only to carbon dioxide. The polypeptide is Odorant receptor 22b (Or22b) (Drosophila melanogaster (Fruit fly)).